Here is a 74-residue protein sequence, read N- to C-terminus: Sec-independent protein translocase protein TatA (74 aa).

The chain crosses the membrane as a helical span at residues 1–21; it reads MGTFSIWHWLIVLLVVVVVFG. A disordered region spans residues 50–74; sequence TAPAGQVANQSTADQTIDVQTKPKG. The segment covering 56–68 has biased composition (polar residues); sequence VANQSTADQTIDV.

It belongs to the TatA/E family. As to quaternary structure, the Tat system comprises two distinct complexes: a TatABC complex, containing multiple copies of TatA, TatB and TatC subunits, and a separate TatA complex, containing only TatA subunits. Substrates initially bind to the TatABC complex, which probably triggers association of the separate TatA complex to form the active translocon.

The protein resides in the cell inner membrane. Its function is as follows. Part of the twin-arginine translocation (Tat) system that transports large folded proteins containing a characteristic twin-arginine motif in their signal peptide across membranes. TatA could form the protein-conducting channel of the Tat system. This chain is Sec-independent protein translocase protein TatA, found in Verminephrobacter eiseniae (strain EF01-2).